The sequence spans 667 residues: UvrABC system protein B (667 aa).

Positions 24-195 (EGLRRGDRFQ…SSGGVFHLRG (172 aa)) constitute a Helicase ATP-binding domain. Residue 37-44 (GVTGSGKT) coordinates ATP. Positions 90 to 113 (YYDYYQPEAYIPTKDLYIEKDADI) match the Beta-hairpin motif. Positions 428 to 581 (QVDDFIEEVQ…QLMYNIEHDI (154 aa)) constitute a Helicase C-terminal domain. The UVR domain maps to 626–661 (EEYLALLEEEMWRASSELRYEDAAMLRDEMLRIKRE).

It belongs to the UvrB family. As to quaternary structure, forms a heterotetramer with UvrA during the search for lesions. Interacts with UvrC in an incision complex.

It is found in the cytoplasm. Functionally, the UvrABC repair system catalyzes the recognition and processing of DNA lesions. A damage recognition complex composed of 2 UvrA and 2 UvrB subunits scans DNA for abnormalities. Upon binding of the UvrA(2)B(2) complex to a putative damaged site, the DNA wraps around one UvrB monomer. DNA wrap is dependent on ATP binding by UvrB and probably causes local melting of the DNA helix, facilitating insertion of UvrB beta-hairpin between the DNA strands. Then UvrB probes one DNA strand for the presence of a lesion. If a lesion is found the UvrA subunits dissociate and the UvrB-DNA preincision complex is formed. This complex is subsequently bound by UvrC and the second UvrB is released. If no lesion is found, the DNA wraps around the other UvrB subunit that will check the other stand for damage. In Kosmotoga olearia (strain ATCC BAA-1733 / DSM 21960 / TBF 19.5.1), this protein is UvrABC system protein B.